Here is a 164-residue protein sequence, read N- to C-terminus: F-box protein At4g05010 (164 aa).

A disordered region spans residues 38-57; sequence SKRAPENDSPPVKRPSHETT. Residues 61 to 109 form the F-box domain; sequence RSLLETLHQDILIRVLCHVDHEDLATLKRVSKTIRKAVIEAKKSHFDYS.

This Arabidopsis thaliana (Mouse-ear cress) protein is F-box protein At4g05010.